The following is a 94-amino-acid chain: Protein translocase subunit SecE (94 aa).

The tract at residues 1–32 (MTDAVGSIDTPDAQDEVPESKKTRKGGKRAKK) is disordered. Residues 22-32 (KTRKGGKRAKK) are compositionally biased toward basic residues. Residues 59–81 (QLTSYTTVVIFFVAIMIRLVTVI) traverse the membrane as a helical segment.

Belongs to the SecE/SEC61-gamma family. As to quaternary structure, component of the Sec protein translocase complex. Heterotrimer consisting of SecY, SecE and SecG subunits. The heterotrimers can form oligomers, although 1 heterotrimer is thought to be able to translocate proteins. Interacts with the ribosome. Interacts with SecDF, and other proteins may be involved. Interacts with SecA.

It localises to the cell membrane. Functionally, essential subunit of the Sec protein translocation channel SecYEG. Clamps together the 2 halves of SecY. May contact the channel plug during translocation. The sequence is that of Protein translocase subunit SecE from Streptomyces galbus.